We begin with the raw amino-acid sequence, 4061 residues long: Hybrid PKS-NRPS synthetase tasS (4061 aa).

The Ketosynthase family 3 (KS3) domain maps to 7–472; that stretch reads QEPIAVIGMA…GTNAHAIIEG (466 aa). Cys180 is an active-site residue. Residues 586 to 911 form a malonyl-CoA:ACP transacylase (MAT) domain region; the sequence is VFTGQGAQWP…RQKNDVEELL (326 aa). Positions 977–1113 are N-terminal hotdog fold; it reads HPLLGRRCVE…ATVNVTFHEP (137 aa). Positions 977 to 1280 are dehydratase (DH) domain; sequence HPLLGRRCVE…VRVQPFSVAG (304 aa). The PKS/mFAS DH domain maps to 977–1282; that stretch reads HPLLGRRCVE…VQPFSVAGPQ (306 aa). The Proton acceptor; for dehydratase activity role is filled by His1010. Residues 1128 to 1282 are C-terminal hotdog fold; that stretch reads LANAEPQRLY…VQPFSVAGPQ (155 aa). Asp1188 acts as the Proton donor; for dehydratase activity in catalysis. Residues 1425 to 1619 form a methyltransferase (MT) domain region; the sequence is LDRFYEEGFE…GFNGVETHTP (195 aa). The ketoreductase (KR) domain stretch occupies residues 2153 to 2325; that stretch reads TYFLLGLSGE…GVVGSDMAIG (173 aa). The region spanning 2437–2516 is the Carrier 1 domain; the sequence is EAIKVVFDTF…LLVEEAVDKL (80 aa). Ser2475 is subject to O-(pantetheine 4'-phosphoryl)serine. The interval 2527–2617 is disordered; it reads EHGGEPDLTQ…QKHQEQTSQS (91 aa). Low complexity predominate over residues 2556–2576; sequence TSAASSSDTGSDSSPTSNSVS. A compositionally biased stretch (polar residues) spans 2577 to 2592; the sequence is ETQTGTPLETPMSTTE. The tract at residues 2632 to 3077 is condensation (C) domain; it reads QMTFGQNRFW…ELATWDTESE (446 aa). An adenylation (A) (KR) domain region spans residues 3103–3510; sequence QVIADHPDAV…RGYLTVEGRI (408 aa). Residues 3633–3712 form the Carrier 2 domain; that stretch reads QNLTATERTL…SMAALLDDGV (80 aa). Ser3672 is modified (O-(pantetheine 4'-phosphoryl)serine). Positions 3813-3969 are reductase (RED) domain; that stretch reads DIDVVLHCAA…LSPLEDAVEA (157 aa).

The protein in the C-terminal section; belongs to the NRP synthetase family.

It catalyses the reaction (2S,4S)-4-hydroxy-4-methylglutamate + 8 malonyl-CoA + 3 S-adenosyl-L-methionine + ATP + 8 NADPH + 11 H(+) = (2S)-3-[(2S)-3,5-dioxo-4-[(2E,4R,6R,8E,10E,12E)-4,6,12-trimethyltetradeca-2,8,10,12-tetraenoyl]pyrrolidin-2-yl]-2-hydroxy-2-methylpropanoate + AMP + 3 S-adenosyl-L-homocysteine + 8 CO2 + diphosphate + 8 NADP(+) + 8 CoA + 6 H2O. It participates in secondary metabolite biosynthesis. Its function is as follows. Hybrid PKS-NRPS synthetase; part of the gene cluster that mediates the biosynthesis of the tetramic acids Sch210971 and Sch210972, potential anti-HIV fungal natural product that contain a decalin core. The PKS module of tasS together with the enoylreductase tasC catalyze the formation of the polyketide unit which is then conjugated to 4-hydroxyl-4-methyl glutamate (HMG) by the condensation domain of the tasS NRPS module. One unique structural feature of Sch210971 and Sch210972 is the tetramic acid motif proposed to be derived from the non-proteinogenic amino acid HMG, by a Dieckmann-type condensation catalyzed by the reductase domain of tasS. The aldolase tasA catalyzes the aldol condensation of 2 molecules of pyruvic acid to yield the intermediate 4-hydroxyl-4-methyl-2-oxoglutarate (HMOG), which can then be stereoselectively transaminated, may be by tasG, to form HMG. The Diels-Alderase tas3 then uses the Dieckmann product of tasS as substrate and catalyzes the Diels-Alder cycloaddition to form the decalin ring of Sch210971 and Sch210972. The protein is Hybrid PKS-NRPS synthetase tasS of Hapsidospora irregularis.